The primary structure comprises 811 residues: G-type lectin S-receptor-like serine/threonine-protein kinase LECRK2 (811 aa).

Residues 1-23 (MAPILFLPILQILLIYCTKSAQA) form the signal peptide. Residues 24–153 (QLNISIGSSL…DGATKWESFG (130 aa)) enclose the Bulb-type lectin domain. Over 24-464 (QLNISIGSSL…DKKYWILGSS (441 aa)) the chain is Extracellular. Residues Asn26, Asn39, Asn59, Asn219, Asn226, Asn237, and Asn242 are each glycosylated (N-linked (GlcNAc...) asparagine). Residues 292–344 (PENICQTIQTKVGSGACGFNSYCTFDGTKNTTNCLCPQRYKFFDNERTYKGCR) enclose the EGF-like; atypical domain. Intrachain disulfides connect Cys296–Cys314, Cys308–Cys325, Cys327–Cys343, Cys389–Cys411, and Cys393–Cys399. An N-linked (GlcNAc...) asparagine glycan is attached at Asn321. Residues 352–436 (CDLDETAAMV…LQATVLLKVP (85 aa)) form the PAN domain. A helical membrane pass occupies residues 465–485 (LFFGSSVLVNFLLIFVLLFGT). The Cytoplasmic segment spans residues 486-811 (YCSITSRKKT…DPSSYISSLA (326 aa)). Positions 521 to 795 (GGFHEVLGTG…KVMQMLDGAV (275 aa)) constitute a Protein kinase domain. ATP contacts are provided by residues 527-535 (LGTGASGIV) and Lys551. The active-site Proton acceptor is the Asp645.

This sequence belongs to the protein kinase superfamily. Ser/Thr protein kinase family.

It localises to the membrane. The enzyme catalyses L-seryl-[protein] + ATP = O-phospho-L-seryl-[protein] + ADP + H(+). It catalyses the reaction L-threonyl-[protein] + ATP = O-phospho-L-threonyl-[protein] + ADP + H(+). Functionally, involved in resistance against the herbivorous insect brown planthopper (N.lugens, BPH). Member of the BPH3 (BPH resistance locus 3) cluster which contains LECRK1, LECRK2 and LECRK3. The sequence is that of G-type lectin S-receptor-like serine/threonine-protein kinase LECRK2 from Oryza sativa subsp. indica (Rice).